The chain runs to 329 residues: Phenylalanine--tRNA ligase alpha subunit (329 aa).

Glu-254 lines the Mg(2+) pocket.

This sequence belongs to the class-II aminoacyl-tRNA synthetase family. Phe-tRNA synthetase alpha subunit type 1 subfamily. As to quaternary structure, tetramer of two alpha and two beta subunits. The cofactor is Mg(2+).

The protein localises to the cytoplasm. The enzyme catalyses tRNA(Phe) + L-phenylalanine + ATP = L-phenylalanyl-tRNA(Phe) + AMP + diphosphate + H(+). This Mannheimia succiniciproducens (strain KCTC 0769BP / MBEL55E) protein is Phenylalanine--tRNA ligase alpha subunit.